Reading from the N-terminus, the 228-residue chain is 7-cyano-7-deazaguanine synthase (228 aa).

8–18 is an ATP binding site; it reads LSGGLDSTTCL. 4 residues coordinate Zn(2+): C188, C198, C201, and C204.

It belongs to the QueC family. Zn(2+) is required as a cofactor.

The catalysed reaction is 7-carboxy-7-deazaguanine + NH4(+) + ATP = 7-cyano-7-deazaguanine + ADP + phosphate + H2O + H(+). It functions in the pathway purine metabolism; 7-cyano-7-deazaguanine biosynthesis. Functionally, catalyzes the ATP-dependent conversion of 7-carboxy-7-deazaguanine (CDG) to 7-cyano-7-deazaguanine (preQ(0)). The sequence is that of 7-cyano-7-deazaguanine synthase from Legionella pneumophila (strain Corby).